Here is a 241-residue protein sequence, read N- to C-terminus: Proteasome subunit alpha (241 aa).

Belongs to the peptidase T1A family. As to quaternary structure, the 20S proteasome core is composed of 14 alpha and 14 beta subunits that assemble into four stacked heptameric rings, resulting in a barrel-shaped structure. The two inner rings, each composed of seven catalytic beta subunits, are sandwiched by two outer rings, each composed of seven alpha subunits. The catalytic chamber with the active sites is on the inside of the barrel. Has a gated structure, the ends of the cylinder being occluded by the N-termini of the alpha-subunits. Is capped at one or both ends by the proteasome regulatory ATPase, PAN.

It localises to the cytoplasm. With respect to regulation, the formation of the proteasomal ATPase PAN-20S proteasome complex, via the docking of the C-termini of PAN into the intersubunit pockets in the alpha-rings, triggers opening of the gate for substrate entry. Interconversion between the open-gate and close-gate conformations leads to a dynamic regulation of the 20S proteasome proteolysis activity. Its function is as follows. Component of the proteasome core, a large protease complex with broad specificity involved in protein degradation. This is Proteasome subunit alpha from Saccharolobus islandicus (strain M.16.4 / Kamchatka #3) (Sulfolobus islandicus).